A 149-amino-acid polypeptide reads, in one-letter code: UPF0260 protein PSPPH_1551 (149 aa).

This sequence belongs to the UPF0260 family.

The sequence is that of UPF0260 protein PSPPH_1551 from Pseudomonas savastanoi pv. phaseolicola (strain 1448A / Race 6) (Pseudomonas syringae pv. phaseolicola (strain 1448A / Race 6)).